The following is a 502-amino-acid chain: ATP synthase subunit alpha (502 aa).

169-176 lines the ATP pocket; that stretch reads GDRQTGKT.

The protein belongs to the ATPase alpha/beta chains family. In terms of assembly, F-type ATPases have 2 components, CF(1) - the catalytic core - and CF(0) - the membrane proton channel. CF(1) has five subunits: alpha(3), beta(3), gamma(1), delta(1), epsilon(1). CF(0) has three main subunits: a(1), b(2) and c(9-12). The alpha and beta chains form an alternating ring which encloses part of the gamma chain. CF(1) is attached to CF(0) by a central stalk formed by the gamma and epsilon chains, while a peripheral stalk is formed by the delta and b chains.

It localises to the cell membrane. The catalysed reaction is ATP + H2O + 4 H(+)(in) = ADP + phosphate + 5 H(+)(out). Functionally, produces ATP from ADP in the presence of a proton gradient across the membrane. The alpha chain is a regulatory subunit. In Streptococcus pyogenes serotype M18 (strain MGAS8232), this protein is ATP synthase subunit alpha.